Reading from the N-terminus, the 421-residue chain is Signal recognition particle receptor FtsY (421 aa).

GTP contacts are provided by residues 228–235, 309–313, and 373–376; these read GINGAGKT, DTAGR, and TKLD.

Belongs to the GTP-binding SRP family. FtsY subfamily. Part of the signal recognition particle protein translocation system, which is composed of SRP and FtsY. SRP is a ribonucleoprotein composed of Ffh and a 4.5S RNA molecule.

Its subcellular location is the cell inner membrane. The protein localises to the cytoplasm. The enzyme catalyses GTP + H2O = GDP + phosphate + H(+). Its function is as follows. Involved in targeting and insertion of nascent membrane proteins into the cytoplasmic membrane. Acts as a receptor for the complex formed by the signal recognition particle (SRP) and the ribosome-nascent chain (RNC). Interaction with SRP-RNC leads to the transfer of the RNC complex to the Sec translocase for insertion into the membrane, the hydrolysis of GTP by both Ffh and FtsY, and the dissociation of the SRP-FtsY complex into the individual components. The sequence is that of Signal recognition particle receptor FtsY from Neisseria meningitidis serogroup B (strain ATCC BAA-335 / MC58).